Consider the following 33-residue polypeptide: Dermaseptin-H9 (33 aa).

At Leu33 the chain carries Leucine amide.

This sequence belongs to the frog skin active peptide (FSAP) family. Dermaseptin subfamily. Expressed by the skin glands.

The protein localises to the secreted. In terms of biological role, has antimicrobial activity. The polypeptide is Dermaseptin-H9 (Pithecopus hypochondrialis (Orange-legged leaf frog)).